A 348-amino-acid polypeptide reads, in one-letter code: MADDRKVALDAALKKIEKNFGKGSIMKLGEKADQKISTIPSGSLALDVALGVGGYPRGRIIEVYGPESSGKTTVSLHAIAEVQRNGGTAAFIDAEHALDPQYAEKLGVNIDELLLSQPDTGEQGLEIADALVSSGAIDIVVIDSVAALVPRAEIDGEMGASHVGLQARLMSQALRKLSGSINKTKTIAIFINQIREKVGVMFGNPETTPGGRALKFYATVRLEVRRAEQLKQGTDIVGNRTKIKVVKNKVAPPFKVAEVDIMYGQGISQEGELLDMAVEKDLISKSGAWYGYKEERIGQGRENAKQYMADHPEMMAEVSKLVRDAYGIGDGSTITEEAEGQEELPLDE.

65–72 provides a ligand contact to ATP; sequence GPESSGKT.

It belongs to the RecA family.

It is found in the cytoplasm. Can catalyze the hydrolysis of ATP in the presence of single-stranded DNA, the ATP-dependent uptake of single-stranded DNA by duplex DNA, and the ATP-dependent hybridization of homologous single-stranded DNAs. It interacts with LexA causing its activation and leading to its autocatalytic cleavage. This chain is Protein RecA, found in Enterococcus faecalis (strain ATCC 700802 / V583).